The sequence spans 722 residues: MKGNFRKRDSSTNSRKGGNSDSNYTNGGVPNQNNSSMFYENPEITRNFDDRQDYLLANSIGSDVTVTVTSGVKYTGLLVSCNLESTNGIDVVLRFPRVADSGVSDSVDDLAKTLGETLLIHGEDVAELELKNIDLSLDEKWENSKAQETTPARTNIEKERVNGESNEVTKFRTDVDISGSGREIKERKLEKWTPEEGAEHFDINKGKALEDDSASWDQFAVNEKKFGVKSTFDEHLYTTKINKDDPNYSKRLQEAERIAKEIESQGTSGNIHIAEDRGIIIDDSGLDEEDLYSGVDRRGDELLAALKSNSKPNSNKGNRYVPPTLRQQPHHMDPAIISSSNSNKNENAVSTDTSTPAAAGAPEGKPPQKTSKNKKSLSSKEAQIEELKKFSEKFKVPYDIPKDMLEVLKRSSSTLKSNSSLPPKPISKTPSAKTVSPTTQISAGKSESRRSGSNISQGQSSTGHTTRSSTSLRRRNHGSFFGAKNPHTNDAKRVLFGKSFNMFIKSKEAHDEKKKGDDASENMEPFFIEKPYFTAPTWLNTIEESYKTFFPDEDTAIQEAQTRFQQRQLNSMGNAVPGMNPAMGMNMGGMMGFPMGGPSASPNPMMNGFAAGSMGMYMPFQPQPMFYHPSMPQMMPVMGSNGAEEGGGNISPHVPAGFMAAGPGAPMGAFGYPGGIPFQGMMGSGPSGMPANGSAMHSHGHSRNYHQTSHHGHHNSSTSGHK.

The segment covering 1–10 has biased composition (basic and acidic residues); that stretch reads MKGNFRKRDS. The segment at 1–38 is disordered; it reads MKGNFRKRDSSTNSRKGGNSDSNYTNGGVPNQNNSSMF. Positions 11-38 are enriched in polar residues; the sequence is STNSRKGGNSDSNYTNGGVPNQNNSSMF. Residues 51–107 enclose the Sm domain; sequence RQDYLLANSIGSDVTVTVTSGVKYTGLLVSCNLESTNGIDVVLRFPRVADSGVSDSV. The residue at position 106 (Ser-106) is a Phosphoserine. A Phosphothreonine modification is found at Thr-193. Phosphoserine is present on Ser-215. Disordered stretches follow at residues 305–380, 412–488, and 683–722; these read ALKS…LSSK, SSTL…NPHT, and GSGP…SGHK. 4 stretches are compositionally biased toward low complexity: residues 307–316, 338–347, 356–370, and 412–421; these read KSNSKPNSNK, SSSNSNKNEN, PAAA…PQKT, and SSTLKSNSSL. Lys-344 participates in a covalent cross-link: Glycyl lysine isopeptide (Lys-Gly) (interchain with G-Cter in ubiquitin). Over residues 429-455 the composition is skewed to polar residues; sequence TPSAKTVSPTTQISAGKSESRRSGSNI. Ser-436 carries the phosphoserine modification. The span at 456–471 shows a compositional bias: low complexity; sequence SQGQSSTGHTTRSSTS. Positions 698-722 are enriched in basic residues; the sequence is SHGHSRNYHQTSHHGHHNSSTSGHK.

Belongs to the ataxin-2 family. Interacts (via C-terminus) with MKT1 (via C-terminus). Interacts with FIR1, IGO1, LSM12, PBP4 and PAB1.

The protein localises to the cytoplasm. It is found in the nucleus. The protein resides in the mitochondrion. Functionally, involved in pre-mRNA polyadenylation. May act to repress the ability of PAB1 to negatively regulate polyadenylation. Negative regulator of poly(A) nuclease (PAN) activity. Promotes mating-type switching in mother cells by positively regulating HO mRNA translation. Localizes MKT1 to polysomes. This Saccharomyces cerevisiae (strain ATCC 204508 / S288c) (Baker's yeast) protein is PAB1-binding protein 1 (PBP1).